A 372-amino-acid polypeptide reads, in one-letter code: Aminomethyltransferase (372 aa).

The protein belongs to the GcvT family. As to quaternary structure, the glycine cleavage system is composed of four proteins: P, T, L and H.

The enzyme catalyses N(6)-[(R)-S(8)-aminomethyldihydrolipoyl]-L-lysyl-[protein] + (6S)-5,6,7,8-tetrahydrofolate = N(6)-[(R)-dihydrolipoyl]-L-lysyl-[protein] + (6R)-5,10-methylene-5,6,7,8-tetrahydrofolate + NH4(+). Its function is as follows. The glycine cleavage system catalyzes the degradation of glycine. This is Aminomethyltransferase from Paraburkholderia phymatum (strain DSM 17167 / CIP 108236 / LMG 21445 / STM815) (Burkholderia phymatum).